A 521-amino-acid polypeptide reads, in one-letter code: Medium/long-chain-fatty-acid--[acyl-carrier-protein] ligase MbtM (521 aa).

It belongs to the ATP-dependent AMP-binding enzyme family.

It catalyses the reaction a long-chain fatty acid + holo-[ACP] + ATP = a long-chain fatty acyl-[ACP] + AMP + diphosphate. The enzyme catalyses a medium-chain fatty acid + holo-[ACP] + ATP = a medium-chain fatty acyl-[ACP] + AMP + diphosphate. It participates in siderophore biosynthesis; mycobactin biosynthesis. Functionally, activates lipidic moieties required for mycobactin biosynthesis. Converts medium- to long-chain aliphatic fatty acids into acyl adenylate, which is further transferred on to the phosphopantetheine arm of the carrier protein MbtL. The sequence is that of Medium/long-chain-fatty-acid--[acyl-carrier-protein] ligase MbtM (mbtM) from Mycobacterium tuberculosis (strain CDC 1551 / Oshkosh).